Reading from the N-terminus, the 231-residue chain is Ribose-5-phosphate isomerase A (231 aa).

Residues 31–34 (TGST), 86–89 (DGAD), and 100–103 (KGLG) contribute to the substrate site. E109 (proton acceptor) is an active-site residue. K127 is a binding site for substrate.

It belongs to the ribose 5-phosphate isomerase family. As to quaternary structure, homodimer.

The enzyme catalyses aldehydo-D-ribose 5-phosphate = D-ribulose 5-phosphate. It participates in carbohydrate degradation; pentose phosphate pathway; D-ribose 5-phosphate from D-ribulose 5-phosphate (non-oxidative stage): step 1/1. In terms of biological role, catalyzes the reversible conversion of ribose-5-phosphate to ribulose 5-phosphate. The polypeptide is Ribose-5-phosphate isomerase A (Gluconobacter oxydans (strain 621H) (Gluconobacter suboxydans)).